We begin with the raw amino-acid sequence, 353 residues long: 2-Hydroxyacid oxidase 2 (353 aa).

The region spanning proline 2–leucine 353 is the FMN hydroxy acid dehydrogenase domain. Residues proline 77–alanine 79, serine 106, and glutamine 128 contribute to the FMN site. Residue tyrosine 130 coordinates a 2-oxocarboxylate. Serine 133 bears the Phosphoserine mark. Threonine 156 serves as a coordination point for FMN. Arginine 165 is a binding site for a 2-oxocarboxylate. Lysine 224 contacts FMN. Catalysis depends on histidine 248, which acts as the Proton acceptor. A 2-oxocarboxylate is bound at residue arginine 251. FMN contacts are provided by residues aspartate 279 to arginine 283 and glycine 302 to arginine 303. Residues serine 351–leucine 353 carry the Microbody targeting signal motif.

The protein belongs to the FMN-dependent alpha-hydroxy acid dehydrogenase family. Homotetramer. Could also form homooctamer. FMN serves as cofactor. Expressed in kidney.

The protein localises to the peroxisome. It catalyses the reaction a (2S)-2-hydroxycarboxylate + O2 = a 2-oxocarboxylate + H2O2. It carries out the reaction 2-hydroxyoctanoate + O2 = 2-oxooctanoate + H2O2. The catalysed reaction is 2-hydroxyhexadecanoate + O2 = 2-oxohexadecanoate + H2O2. The enzyme catalyses 2-hydroxyhexanoate + O2 = 2-oxohexanoate + H2O2. It catalyses the reaction mandelate + O2 = phenylglyoxylate + H2O2. With respect to regulation, is inhibited in vitro by CCPST (4-carboxy-5-(4-chlorophenyl)sulfanyl-1,2,3-thiadiazole). In terms of biological role, oxidase that catalyzes the oxidation of medium and long chain hydroxyacids such as 2-hydroxyhexadecanoate, 2-hydroxyoctanoate, 2-hydroxyhexanoate and 2-hydroxybutanoate, to the correspondong 2-oxoacids. Its role in the oxidation of 2-hydroxy fatty acids may contribute to the general pathway of fatty acid alpha-oxidation. Can also use mandelate as substrate. Active in vitro with the artificial electron acceptor 2,6-dichlorophenolindophenol (DCIP), but O2 is believed to be the physiological electron acceptor, leading to the production of H2O2. The protein is 2-Hydroxyacid oxidase 2 (Hao2) of Rattus norvegicus (Rat).